The primary structure comprises 212 residues: Protein Nef (212 aa).

Gly2 carries the N-myristoyl glycine; by host lipid modification. A Phosphoserine; by host modification is found at Ser6. The acidic; interacts with host PACS1 and PACS2; stabilizes the interaction of NEF/MHC-I with host AP1M1; necessary for MHC-I internalization stretch occupies residues 67 to 71 (EESEE). Positions 75 to 84 (PVRPQVPLRP) are SH3-binding; interaction with Src family tyrosine kinases. The short motif at 78 to 81 (PQVP) is the PxxP; stabilizes the interaction of NEF/MHC-I with host AP1M1; necessary for MHC-I internalization element. Residues 114 to 130 (EILDLWVYNTQGIFPDW) are mediates dimerization, Nef-PTE1 interaction. Positions 154–186 (VDPREVEEATEGETNCLLHPVCQHGMEDTEREV) are binding to ATP6V1H. The Dileucine internalization motif; necessary for CD4 internalization signature appears at 170 to 171 (LL). The short motif at 180–181 (ED) is the Diacidic; necessary for CD4 internalization element.

This sequence belongs to the lentivirus primate group Nef protein family. In terms of assembly, monomer; cytosolic form. Homodimer; membrane bound form. Interacts with Nef associated p21-activated kinase (PAK2); this interaction activates PAK2. Associates with the Nef-MHC-I-AP1 complex; this complex is required for MHC-I internalization. Interacts (via C-terminus) with host PI3-kinase. Interacts with host PACS1; this interaction seems to be weak. Interacts with host PACS2. Interacts with host LCK and MAPK3; these interactions inhibit the kinase activity of the latter. Interacts with host ATP6V1H; this interaction may play a role in CD4 endocytosis. Associates with the CD4-Nef-AP2 complex; this complex is required for CD4 internalization. Interacts with host AP2 subunit alpha and AP2 subunit sigma2. Interacts with TCR-zeta chain; this interaction up-regulates the Fas ligand (FasL) surface expression. Interacts with host HCK, LYN, and SRC; these interactions activate the Src family kinases. Interacts with MAP3K5; this interaction inhibits the Fas and TNFR-mediated death signals. Interacts with beta-COP and PTE1. Interacts with human RACK1; this increases Nef phosphorylation by PKC. Interacts with TP53; this interaction decreases the half-life of TP53, protecting the infected cell against p53-mediated apoptosis. Post-translationally, the virion-associated Nef proteins are cleaved by the viral protease to release the soluble C-terminal core protein. Nef is probably cleaved concomitantly with viral structural proteins on maturation of virus particles. In terms of processing, myristoylated. Phosphorylated on serine residues, probably by host PKCdelta and theta.

The protein resides in the host cell membrane. It localises to the virion. Its subcellular location is the secreted. It is found in the host Golgi apparatus membrane. Functionally, factor of infectivity and pathogenicity, required for optimal virus replication. Alters numerous pathways of T-lymphocyte function and down-regulates immunity surface molecules in order to evade host defense and increase viral infectivity. Alters the functionality of other immunity cells, like dendritic cells, monocytes/macrophages and NK cells. Its function is as follows. In infected CD4(+) T-lymphocytes, down-regulates the surface MHC-I, mature MHC-II, CD4, CD28, CCR5 and CXCR4 molecules. Mediates internalization and degradation of host CD4 through the interaction of with the cytoplasmic tail of CD4, the recruitment of AP-2 (clathrin adapter protein complex 2), internalization through clathrin coated pits, and subsequent transport to endosomes and lysosomes for degradation. Diverts host MHC-I molecules to the trans-Golgi network-associated endosomal compartments by an endocytic pathway to finally target them for degradation. MHC-I down-regulation may involve AP-1 (clathrin adapter protein complex 1) or possibly Src family kinase-ZAP70/Syk-PI3K cascade recruited by PACS2. In consequence infected cells are masked for immune recognition by cytotoxic T-lymphocytes. Decreasing the number of immune receptors also prevents reinfection by more HIV particles (superinfection). Down-regulates host SERINC3 and SERINC5 thereby excluding these proteins from the viral particles. Virion infectivity is drastically higher when SERINC3 or SERINC5 are excluded from the viral envelope, because these host antiviral proteins impair the membrane fusion event necessary for subsequent virion penetration. In terms of biological role, bypasses host T-cell signaling by inducing a transcriptional program nearly identical to that of anti-CD3 cell activation. Interaction with TCR-zeta chain up-regulates the Fas ligand (FasL). Increasing surface FasL molecules and decreasing surface MHC-I molecules on infected CD4(+) cells send attacking cytotoxic CD8+ T-lymphocytes into apoptosis. Plays a role in optimizing the host cell environment for viral replication without causing cell death by apoptosis. Protects the infected cells from apoptosis in order to keep them alive until the next virus generation is ready to strike. Inhibits the Fas and TNFR-mediated death signals by blocking MAP3K5/ASK1. Decreases the half-life of TP53, protecting the infected cell against p53-mediated apoptosis. Inhibits the apoptotic signals regulated by the Bcl-2 family proteins through the formation of a Nef/PI3-kinase/PAK2 complex that leads to activation of PAK2 and induces phosphorylation of host BAD. Functionally, extracellular Nef protein targets CD4(+) T-lymphocytes for apoptosis by interacting with CXCR4 surface receptors. The chain is Protein Nef from Homo sapiens (Human).